A 319-amino-acid chain; its full sequence is Coproporphyrin III ferrochelatase 2 (319 aa).

Fe-coproporphyrin III is bound by residues Tyr-13, Arg-30, 46-47 (RY), Ser-54, and Tyr-125. Residues His-181 and Glu-262 each coordinate Fe(2+).

This sequence belongs to the ferrochelatase family.

It localises to the cytoplasm. The enzyme catalyses Fe-coproporphyrin III + 2 H(+) = coproporphyrin III + Fe(2+). It participates in porphyrin-containing compound metabolism; protoheme biosynthesis. In terms of biological role, involved in coproporphyrin-dependent heme b biosynthesis. Catalyzes the insertion of ferrous iron into coproporphyrin III to form Fe-coproporphyrin III. The polypeptide is Coproporphyrin III ferrochelatase 2 (Bacillus cereus (strain ZK / E33L)).